A 150-amino-acid chain; its full sequence is Large ribosomal subunit protein eL19 (150 aa).

A disordered region spans residues 56–89 (KGQSRARARAFQEARKKGRHRGPGSKKGKKTARM). Residues 71 to 89 (KKGRHRGPGSKKGKKTARM) show a composition bias toward basic residues.

Belongs to the eukaryotic ribosomal protein eL19 family. As to quaternary structure, part of the 50S ribosomal subunit.

Functionally, binds to the 23S rRNA. The polypeptide is Large ribosomal subunit protein eL19 (Thermococcus kodakarensis (strain ATCC BAA-918 / JCM 12380 / KOD1) (Pyrococcus kodakaraensis (strain KOD1))).